Reading from the N-terminus, the 895-residue chain is uncharacterized protein (895 aa).

The segment at 257-283 is disordered; sequence KSHKYPPGPPDNSSSNTSGQQNTSNTS. Positions 268–283 are enriched in low complexity; the sequence is NSSSNTSGQQNTSNTS.

This is an uncharacterized protein from Acanthamoeba polyphaga mimivirus (APMV).